The chain runs to 367 residues: Endophilin-A2 (367 aa).

Residues 1-21 form a membrane-binding amphipathic helix region; sequence MSVAGLKKQFYKASQLVSEKV. Positions 18–249 constitute a BAR domain; sequence SEKVGGAEGT…LKRRMREASS (232 aa). Residues 60–87 are required for dimerization upon membrane association; sequence PNPASRAKLTMLNTMSKIRGQVKNPGYP. The stretch at 181 to 250 forms a coiled coil; that stretch reads EELRQAMEKF…KRRMREASSR (70 aa). The tract at residues 218 to 254 is interaction with ARC; the sequence is LVDAQLDYHRQAVQILDELAEKLKRRMREASSRPRRE. Residues 243 to 293 form a disordered region; it reads RMREASSRPRREYKPKPRETYDFGESDQSNGGFSCTPTPKVSASSSFRSDK. Positions 245 to 263 are enriched in basic and acidic residues; sequence REASSRPRREYKPKPRETY. The span at 268-289 shows a compositional bias: polar residues; it reads SDQSNGGFSCTPTPKVSASSSF. One can recognise an SH3 domain in the interval 305 to 364; that stretch reads LDQPCCKALYDFEPENDGELGFKEGDIITLTNQIDENWYEGMINGQSGFFPLNYVEVLVP.

This sequence belongs to the endophilin family. In terms of assembly, interacts with ARC. Interacts with SYNJ1 and DNM1. As to expression, highest level in central region of the theca of developing follicles (at protein level). Expressed at highest level in brain and testis, at high level in kidney, lung and stroma, low level in spleen and adrenal gland (at protein level). Expressed in most tissue with highest levels in small ovarian follicles, brain and testis.

The protein resides in the cytoplasm. It localises to the early endosome membrane. The protein localises to the cell projection. It is found in the podosome. Functionally, implicated in endocytosis. May recruit other proteins to membranes with high curvature. The sequence is that of Endophilin-A2 from Gallus gallus (Chicken).